A 260-amino-acid polypeptide reads, in one-letter code: Outer membrane protein assembly factor BamD (260 aa).

An N-terminal signal peptide occupies residues methionine 1–alanine 19. Cysteine 20 carries the N-palmitoyl cysteine lipid modification. Cysteine 20 carries the S-diacylglycerol cysteine lipid modification.

It belongs to the BamD family. Part of the Bam complex.

The protein localises to the cell outer membrane. In terms of biological role, part of the outer membrane protein assembly complex, which is involved in assembly and insertion of beta-barrel proteins into the outer membrane. This is Outer membrane protein assembly factor BamD from Pasteurella multocida (strain Pm70).